The primary structure comprises 54 residues: Ductus ejaculatorius peptide 99B (54 aa).

A signal peptide spans 1–21 (MKTPLFLLLVVLASLLGLALS). A Pyrrolidone carboxylic acid modification is found at Gln22. Asn25 is a glycosylation site (N-linked (GlcNAc...) asparagine). A disulfide bridge links Cys40 with Cys52. The propeptide occupies 53–54 (RK).

The protein to paragonial peptide B. As to expression, ductus ejaculatorius.

The protein localises to the secreted. Functionally, induces post-mating responses; increased oviposition and reduced receptivity. This is Ductus ejaculatorius peptide 99B (Dup99B) from Drosophila melanogaster (Fruit fly).